A 757-amino-acid chain; its full sequence is Protein aardvark (757 aa).

Disordered regions lie at residues 39–63 (SSIN…DSNN), 122–166 (LEEN…SSIL), and 256–285 (SSNG…IESS). Positions 121-205 (ILEENNNNNN…FNQFNFLEGI (85 aa)) form a coiled coil. Low complexity-rich tracts occupy residues 125-164 (NNNN…SSSS) and 256-270 (SSNG…NNNN). The F-box domain maps to 310-356 (QFDIFLIPTEMLVHLLSFLSANDLWRISLTCKRIWYIVDVFKFWELL). 6 ARM repeats span residues 454–498 (GGIS…SNDN), 506–548 (GGIQ…VAIE), 549–591 (GGIQ…SAKE), 592–634 (GGIG…ISRQ), 635–678 (NGIQ…IARE), and 679–723 (GGIN…RSGG).

The protein belongs to the beta-catenin family.

Its subcellular location is the cytoplasm. It localises to the cell junction. Its function is as follows. Required to regulate pattern formation during multi-cellular stages of development and for the formation of adherens junctions. Plays a structural role during the regulation of stalk formation. Involved in cell signaling. Required for spore-cell differentiation. Overexpression increases number and size of cell junctions and reduces spore-cell formation. The chain is Protein aardvark (aarA) from Dictyostelium discoideum (Social amoeba).